A 666-amino-acid chain; its full sequence is NADH-ubiquinone oxidoreductase chain 5 (666 aa).

17 helical membrane-spanning segments follow: residues 3 to 23, 31 to 51, 59 to 78, 82 to 101, 119 to 139, 168 to 190, 211 to 231, 251 to 271, 283 to 303, 311 to 333, 337 to 357, 375 to 395, 421 to 441, 467 to 487, 524 to 544, 572 to 594, and 629 to 649; these read LLIL…GRWL, FSTL…FEIG, IFLV…GFLF, TVTM…IYSI, IFTF…MFLG, LIVN…WVFN, FLGF…IGAI, TPVS…FLMI, ILFI…VTGV, VIAY…SCYD, FHLA…GSVI, FMPL…GFPF, YISF…FYSF, LLMI…GYLI, WLPF…QIFL, VLYN…FKIL, and YLFF…YSYI.

The protein belongs to the complex I subunit 5 family.

Its subcellular location is the mitochondrion inner membrane. The catalysed reaction is a ubiquinone + NADH + 5 H(+)(in) = a ubiquinol + NAD(+) + 4 H(+)(out). Its function is as follows. Core subunit of the mitochondrial membrane respiratory chain NADH dehydrogenase (Complex I) that is believed to belong to the minimal assembly required for catalysis. Complex I functions in the transfer of electrons from NADH to the respiratory chain. The immediate electron acceptor for the enzyme is believed to be ubiquinone. This is NADH-ubiquinone oxidoreductase chain 5 (ND5) from Chondrus crispus (Carrageen Irish moss).